The chain runs to 182 residues: MYHVVAATINPAKIKAISQAFSDIFGAGSCHIEGVEVDSGVAAQPISNTETRTGARQRVMNARRVRPEADFWVAIEAGIEEDTAFAWMVVENQKLRGESRSASFTLPAIVMKGIHQGRELGDEMARLTGIDNIKHKGGAIGAFTAGHLTRSSVYHQALILALCPFHNDIYQRKADDEDSDLI.

Residues D38 and E68 each coordinate Mg(2+). 68–69 (EA) contacts substrate.

Belongs to the YjjX NTPase family. In terms of assembly, homodimer. It depends on Mg(2+) as a cofactor. Mn(2+) is required as a cofactor.

The catalysed reaction is XTP + H2O = XDP + phosphate + H(+). It catalyses the reaction ITP + H2O = IDP + phosphate + H(+). Its function is as follows. Phosphatase that hydrolyzes non-canonical purine nucleotides such as XTP and ITP to their respective diphosphate derivatives. Probably excludes non-canonical purines from DNA/RNA precursor pool, thus preventing their incorporation into DNA/RNA and avoiding chromosomal lesions. This Erwinia tasmaniensis (strain DSM 17950 / CFBP 7177 / CIP 109463 / NCPPB 4357 / Et1/99) protein is Inosine/xanthosine triphosphatase.